A 122-amino-acid polypeptide reads, in one-letter code: Large ribosomal subunit protein uL14 (122 aa).

Belongs to the universal ribosomal protein uL14 family. Part of the 50S ribosomal subunit. Forms a cluster with proteins L3 and L19. In the 70S ribosome, L14 and L19 interact and together make contacts with the 16S rRNA in bridges B5 and B8.

Binds to 23S rRNA. Forms part of two intersubunit bridges in the 70S ribosome. The polypeptide is Large ribosomal subunit protein uL14 (Chlorobaculum parvum (strain DSM 263 / NCIMB 8327) (Chlorobium vibrioforme subsp. thiosulfatophilum)).